Here is a 760-residue protein sequence, read N- to C-terminus: Serine/threonine-protein kinase PknG (760 aa).

The interval 1–31 (MTSPENPDLPDADDAYVDSGPGTQPASLEDL) is disordered. The Protein kinase domain occupies 161–403 (YEIKGCIAHG…SAEEMSSQLL (243 aa)). Residues 167-175 (IAHGGLGWV) and Lys-191 contribute to the ATP site. Residue Asp-286 is the Proton acceptor of the active site.

The protein belongs to the protein kinase superfamily. Ser/Thr protein kinase family. In terms of assembly, interacts with GarA in vitro.

The enzyme catalyses L-seryl-[protein] + ATP = O-phospho-L-seryl-[protein] + ADP + H(+). The catalysed reaction is L-threonyl-[protein] + ATP = O-phospho-L-threonyl-[protein] + ADP + H(+). In Mycolicibacterium smegmatis (strain ATCC 700084 / mc(2)155) (Mycobacterium smegmatis), this protein is Serine/threonine-protein kinase PknG (pknG).